Reading from the N-terminus, the 418-residue chain is Phosphatidylcholine:ceramide cholinephosphotransferase 1 (418 aa).

The SAM domain maps to 12 to 75 (WSPKKVADWL…LDMIETLKME (64 aa)). Position 13 is a phosphoserine (serine 13). The next 5 membrane-spanning stretches (helical) occupy residues 141–161 (FLAF…ISVV), 189–209 (FSIC…QWLL), 220–240 (FFCI…VTTL), 281–301 (MCGD…YLFI), and 309–329 (LWWY…CILL). Histidine 290 is a catalytic residue. Catalysis depends on residues histidine 333 and aspartate 337. The chain crosses the membrane as a helical span at residues 335 to 352 (TVDVVVAYYITTRLFWWY).

The protein belongs to the sphingomyelin synthase family. In terms of tissue distribution, widely expressed. Highest expression in the cardiovascular system.

It is found in the golgi apparatus membrane. The enzyme catalyses an N-acylsphing-4-enine + a 1,2-diacyl-sn-glycero-3-phosphocholine = a sphingomyelin + a 1,2-diacyl-sn-glycerol. It carries out the reaction 1-(9Z-octadecenoyl)-2-acyl-sn-3-glycerol + a sphingomyelin = a 1-(9Z-octadecenoyl)-2-acyl-sn-glycero-3-phosphocholine + an N-acylsphing-4-enine. The catalysed reaction is N-hexadecanoylsphinganine + a 1,2-diacyl-sn-glycero-3-phosphocholine = N-hexadecanoyl-sphinganine-1-phosphocholine + a 1,2-diacyl-sn-glycerol. It catalyses the reaction N-hexadecanoyl-(4R)-hydroxysphinganine + a 1,2-diacyl-sn-glycero-3-phosphocholine = N-hexadecanoyl-(4R)-hydroxysphinganine-phosphocholine + a 1,2-diacyl-sn-glycerol. The enzyme catalyses an N-acylsphing-4-enine + a 1,2-diacyl-sn-glycero-3-phosphoethanolamine = an N-acylsphing-4-enine 1-phosphoethanolamine + a 1,2-diacyl-sn-glycerol. The protein operates within sphingolipid metabolism. Functionally, major sphingomyelin synthase at the Golgi apparatus. Catalyzes the reversible transfer of phosphocholine moiety in sphingomyelin biosynthesis: in the forward reaction transfers phosphocholine head group of phosphatidylcholine (PC) on to ceramide (CER) to form ceramide phosphocholine (sphingomyelin, SM) and diacylglycerol (DAG) as by-product, and in the reverse reaction transfers phosphocholine from SM to DAG to form PC and CER. The direction of the reaction depends on the levels of CER and DAG in Golgi membranes. Converts the newly synthesized CER, that is transported from the endoplasmic reticulum to the trans-Golgi by the Cer transport protein (CERT), to SM. Can form a heteromeric complex with glucosylceramide synthase (GCS) increasing SMS activity and reducing glucosylceramide synthesis, a critical mechanism that controls the metabolic fate of CER in the Golgi. Does not use free phosphorylcholine or CDP-choline as donor. Can also transfer phosphoethanolamine head group of phosphatidylethanolamine (PE) on to CER to form ceramide phosphoethanolamine (CPE). Regulates receptor-mediated signal transduction via mitogenic DAG and proapoptotic CER, as well as via SM, a structural component of membrane rafts that serve as platforms for signal transduction and protein sorting. Plays a role in secretory transport via regulation of DAG pool at the Golgi apparatus and its downstream effects on PRKD1. The polypeptide is Phosphatidylcholine:ceramide cholinephosphotransferase 1 (SGMS1) (Sus scrofa (Pig)).